Reading from the N-terminus, the 452-residue chain is tRNA modification GTPase MnmE (452 aa).

R22, E79, and K119 together coordinate (6S)-5-formyl-5,6,7,8-tetrahydrofolate. The region spanning 215–375 (GMKVVIAGRP…LRQHLKQSMG (161 aa)) is the TrmE-type G domain. N225 is a binding site for K(+). Residues 225–230 (NAGKSS), 244–250 (TDIAGTT), 269–272 (DTAG), and 333–336 (NKAD) each bind GTP. Residue S229 participates in Mg(2+) binding. Residues T244, I246, and T249 each coordinate K(+). T250 lines the Mg(2+) pocket. Residue K452 participates in (6S)-5-formyl-5,6,7,8-tetrahydrofolate binding.

It belongs to the TRAFAC class TrmE-Era-EngA-EngB-Septin-like GTPase superfamily. TrmE GTPase family. In terms of assembly, homodimer. Heterotetramer of two MnmE and two MnmG subunits. K(+) serves as cofactor.

The protein resides in the cytoplasm. In terms of biological role, exhibits a very high intrinsic GTPase hydrolysis rate. Involved in the addition of a carboxymethylaminomethyl (cmnm) group at the wobble position (U34) of certain tRNAs, forming tRNA-cmnm(5)s(2)U34. The polypeptide is tRNA modification GTPase MnmE (Histophilus somni (strain 129Pt) (Haemophilus somnus)).